The following is a 299-amino-acid chain: Coenzyme PQQ synthesis protein B (299 aa).

The protein belongs to the PqqB family.

It participates in cofactor biosynthesis; pyrroloquinoline quinone biosynthesis. May be involved in the transport of PQQ or its precursor to the periplasm. The sequence is that of Coenzyme PQQ synthesis protein B from Methylobacterium radiotolerans (strain ATCC 27329 / DSM 1819 / JCM 2831 / NBRC 15690 / NCIMB 10815 / 0-1).